A 44-amino-acid chain; its full sequence is Thaumatin-like protein 5 (44 aa).

It belongs to the thaumatin family.

In Glebionis coronaria (Crown daisy), this protein is Thaumatin-like protein 5.